The chain runs to 127 residues: Small ribosomal subunit protein uS11 (127 aa).

This sequence belongs to the universal ribosomal protein uS11 family. As to quaternary structure, part of the 30S ribosomal subunit. Interacts with proteins S7 and S18. Binds to IF-3.

Its function is as follows. Located on the platform of the 30S subunit, it bridges several disparate RNA helices of the 16S rRNA. Forms part of the Shine-Dalgarno cleft in the 70S ribosome. This Chlorobaculum parvum (strain DSM 263 / NCIMB 8327) (Chlorobium vibrioforme subsp. thiosulfatophilum) protein is Small ribosomal subunit protein uS11.